A 209-amino-acid polypeptide reads, in one-letter code: Large ribosomal subunit protein uL3 (209 aa).

Residues 128-152 (QARGPMSHGSRYHRRPGSMGPVDPN) form a disordered region.

This sequence belongs to the universal ribosomal protein uL3 family. Part of the 50S ribosomal subunit. Forms a cluster with proteins L14 and L19.

One of the primary rRNA binding proteins, it binds directly near the 3'-end of the 23S rRNA, where it nucleates assembly of the 50S subunit. In Halalkalibacterium halodurans (strain ATCC BAA-125 / DSM 18197 / FERM 7344 / JCM 9153 / C-125) (Bacillus halodurans), this protein is Large ribosomal subunit protein uL3.